We begin with the raw amino-acid sequence, 242 residues long: ADP-dependent L-serine kinase SerK (242 aa).

Glu-30 is an active-site residue. 4 residues coordinate ADP: Ser-43, Ile-49, Trp-51, and Lys-52. Residue Val-68 coordinates O-phospho-L-serine. ADP-binding residues include Asp-69, Gly-70, His-71, His-72, and Arg-73. Asp-69 serves as a coordination point for Mg(2+). Positions 70, 71, and 72 each coordinate O-phospho-L-serine. O-phospho-L-serine-binding residues include Trp-102, Lys-221, Thr-223, and His-225.

The protein belongs to the SerK family. It depends on Mg(2+) as a cofactor.

The catalysed reaction is L-serine + ADP = O-phospho-L-serine + AMP + H(+). It participates in amino-acid biosynthesis; L-cysteine biosynthesis; L-cysteine from L-serine: step 1/2. Free serine kinase that uses ADP to phosphorylate L-serine to yield O-phospho-L-serine and AMP. In Thermococcus kodakarensis (strain ATCC BAA-918 / JCM 12380 / KOD1) (Pyrococcus kodakaraensis (strain KOD1)), this protein is ADP-dependent L-serine kinase SerK.